Here is a 319-residue protein sequence, read N- to C-terminus: Phospho-N-acetylmuramoyl-pentapeptide-transferase (319 aa).

The next 10 membrane-spanning stretches (helical) occupy residues 1–21 (MSIL…FLLM), 53–73 (TMGG…VGAW), 77–97 (LNGT…IGMW), 117–137 (FLAQ…EGFQ), 140–160 (FGLT…MVGF), 172–192 (GLVT…ALVQ), 195–215 (TEVA…FPFN), 221–241 (IFMG…VALV), 249–269 (LIIG…VAYF), and 298–318 (GVFW…ILFL).

The protein belongs to the glycosyltransferase 4 family. MraY subfamily. It depends on Mg(2+) as a cofactor.

Its subcellular location is the cell membrane. The enzyme catalyses UDP-N-acetyl-alpha-D-muramoyl-L-alanyl-gamma-D-glutamyl-L-lysyl-D-alanyl-D-alanine + di-trans,octa-cis-undecaprenyl phosphate = Mur2Ac(oyl-L-Ala-gamma-D-Glu-L-Lys-D-Ala-D-Ala)-di-trans,octa-cis-undecaprenyl diphosphate + UMP. Its pathway is cell wall biogenesis; peptidoglycan biosynthesis. Functionally, catalyzes the initial step of the lipid cycle reactions in the biosynthesis of the cell wall peptidoglycan: transfers peptidoglycan precursor phospho-MurNAc-pentapeptide from UDP-MurNAc-pentapeptide onto the lipid carrier undecaprenyl phosphate, yielding undecaprenyl-pyrophosphoryl-MurNAc-pentapeptide, known as lipid I. This is Phospho-N-acetylmuramoyl-pentapeptide-transferase from Limosilactobacillus fermentum (strain NBRC 3956 / LMG 18251) (Lactobacillus fermentum).